A 383-amino-acid chain; its full sequence is Putative glutamate--cysteine ligase 2-1 (383 aa).

The protein belongs to the glutamate--cysteine ligase type 2 family. YbdK subfamily.

It catalyses the reaction L-cysteine + L-glutamate + ATP = gamma-L-glutamyl-L-cysteine + ADP + phosphate + H(+). ATP-dependent carboxylate-amine ligase which exhibits weak glutamate--cysteine ligase activity. The protein is Putative glutamate--cysteine ligase 2-1 of Arthrobacter sp. (strain FB24).